A 673-amino-acid polypeptide reads, in one-letter code: Forkhead box protein O3 (673 aa).

The tract at residues 1-153 is disordered; sequence MAEAPASPAP…SGQPRKCSSR (153 aa). S30 bears the Phosphoserine; by AMPK mark. T32 bears the Phosphothreonine; by PKB/AKT1 mark. K46 carries the N6-methyllysine modification. Residues 57–68 are compositionally biased toward acidic residues; it reads IPEEEDDEDDED. Gly residues predominate over residues 79–89; it reads IGGGGGSGTLG. The segment at 80–108 is required for mitochondrial import; sequence GGGGGSGTLGSGLLLEDSARVLAPGGQDP. K149 bears the N6-methyllysine mark. Residues 157 to 251 constitute a DNA-binding region (fork-head); it reads WGNLSYADLI…KSGKAPRRRA (95 aa). A Phosphothreonine; by AMPK modification is found at T179. Phosphoserine; by STK4/MST1 is present on S209. S215 is subject to Phosphoserine; by MAPKAPK5. At K230 the chain carries N6-methyllysine. The disordered stretch occupies residues 231–302; it reads SSWWIINPDG…GSPTSRSSDE (72 aa). Position 242 is an N6-acetyllysine (K242). Residues 242–259 carry the Nuclear localization signal motif; that stretch reads KSGKAPRRRAVSMDNSNK. Phosphoserine; by PKB/AKT1 and MAPKAPK5 is present on S253. Positions 261–272 are enriched in basic residues; sequence TKSRGRAAKKKA. N6-methyllysine occurs at positions 262 and 271. 2 positions are modified to phosphoserine: S280 and S284. Polar residues predominate over residues 283-298; that stretch reads DSPSQLSKWPGSPTSR. N6-methyllysine is present on K290. S294 is subject to Phosphoserine. S299 carries the phosphoserine; by CaMK2A modification. A mediates interaction with CHUK/IKKA and IKBKB/IKKB region spans residues 300-673; sequence SDELDAWTDF…QASSQSWVPG (374 aa). S311 is modified (phosphoserine). Phosphoserine; by SGK1 is present on S315. 2 positions are modified to phosphoserine; by AMPK: S399 and S413. Position 419 is an N6-methyllysine (K419). The residue at position 421 (S421) is a Phosphoserine. Residues 536–587 form a disordered region; sequence HQHQTQGALGGSRALSNSVSNMGLSESSSLGSAKHQQQSPVSQSMQTLSDSL. A compositionally biased stretch (polar residues) spans 549–582; that stretch reads ALSNSVSNMGLSESSSLGSAKHQQQSPVSQSMQT. S551 carries the post-translational modification Phosphoserine; by MAPKAPK5. S555 bears the Phosphoserine; by AMPK and MAPKAPK5 mark. A phosphoserine; by AMPK mark is found at S588 and S626. S644 carries the phosphoserine; by IKKB modification.

In terms of assembly, upon metabolic stress, forms a complex composed of FOXO3, SIRT3 and mitochondrial RNA polymerase POLRMT; the complex is recruited to mtDNA in a SIRT3-dependent manner. Also forms a complex composed of FOXO3, SIRT3, TFAM and POLRMT. Interacts with SIRT2; the interaction occurs independently of SIRT2 deacetylase activity. Interacts with YWHAB/14-3-3-beta and YWHAZ/14-3-3-zeta, which are required for cytosolic sequestration. Upon oxidative stress, interacts with STK4/MST1, which disrupts interaction with YWHAB/14-3-3-beta and leads to nuclear translocation. Interacts with PIM1. Interacts with DDIT3/CHOP. Interacts (deacetylated form) with SKP2. Interacts with CHUK and IKBKB. Interacts with CAMK2A, CAMK2B and calcineurin A. Interacts with NUPR1; this interaction represses FOXO3 transactivation. In the presence of survival factors such as IGF1, phosphorylated on Thr-32 and Ser-253 by AKT1/PKB. This phosphorylated form then interacts with 14-3-3 proteins and is retained in the cytoplasm. Survival factor withdrawal induces dephosphorylation and promotes translocation to the nucleus where the dephosphorylated protein induces transcription of target genes and triggers apoptosis. Although AKT1/PKB doesn't appear to phosphorylate Ser-315 directly, it may activate other kinases that trigger phosphorylation at this residue. Phosphorylated by STK4/MST1 on Ser-209 upon oxidative stress, which leads to dissociation from YWHAB/14-3-3-beta and nuclear translocation. Phosphorylated by PIM1. Phosphorylation by AMPK leads to the activation of transcriptional activity without affecting subcellular localization. In response to metabolic stress, phosphorylated by AMPK on Ser-30 which mediates FOXO3 mitochondrial translocation. Phosphorylation by MAPKAPK5 promotes nuclear localization and DNA-binding, leading to induction of miR-34b and miR-34c expression, 2 post-transcriptional regulators of MYC that bind to the 3'UTR of MYC transcript and prevent its translation. Phosphorylated by CHUK/IKKA and IKBKB/IKKB. TNF-induced inactivation of FOXO3 requires its phosphorylation at Ser-644 by IKBKB/IKKB which promotes FOXO3 retention in the cytoplasm, polyubiquitination and ubiquitin-mediated proteasomal degradation. May be dephosphorylated by calcineurin A on Ser-299 which abolishes FOXO3 transcriptional activity. In cancer cells, ERK mediated-phosphorylation of Ser-12 is required for mitochondrial translocation of FOXO3 in response to metabolic stress or chemotherapeutic agents. Phosphorylation at Ser-253 promotes its degradation by the proteasome. Dephosphorylation at Ser-253 by protein phosphatase 2A (PPP2CA) promotes its stabilization; interaction with PPP2CA is enhanced by AMBRA1. In terms of processing, deacetylation by SIRT1 or SIRT2 stimulates interaction of FOXO3 with SKP2 and facilitates SCF(SKP2)-mediated FOXO3 ubiquitination and proteasomal degradation. Deacetylation by SIRT2 stimulates FOXO3-mediated transcriptional activity in response to oxidative stress. Deacetylated by SIRT3. Deacetylation by SIRT3 stimulates FOXO3-mediated mtDNA transcriptional activity in response to metabolic stress. Post-translationally, heavily methylated by SET9 which decreases stability, while moderately increasing transcriptional activity. The main methylation site is Lys-271. Methylation doesn't affect subcellular location. Polyubiquitinated. Ubiquitinated by a SCF complex containing SKP2, leading to proteasomal degradation. In terms of processing, the N-terminus is cleaved following import into the mitochondrion. As to expression, ubiquitous.

The protein localises to the cytoplasm. The protein resides in the cytosol. It is found in the nucleus. It localises to the mitochondrion matrix. Its subcellular location is the mitochondrion outer membrane. In terms of biological role, transcriptional activator that recognizes and binds to the DNA sequence 5'-[AG]TAAA[TC]A-3' and regulates different processes, such as apoptosis and autophagy. Acts as a positive regulator of autophagy in skeletal muscle: in starved cells, enters the nucleus following dephosphorylation and binds the promoters of autophagy genes, such as GABARAP1L, MAP1LC3B and ATG12, thereby activating their expression, resulting in proteolysis of skeletal muscle proteins. Triggers apoptosis in the absence of survival factors, including neuronal cell death upon oxidative stress. Participates in post-transcriptional regulation of MYC: following phosphorylation by MAPKAPK5, promotes induction of miR-34b and miR-34c expression, 2 post-transcriptional regulators of MYC that bind to the 3'UTR of MYC transcript and prevent its translation. In response to metabolic stress, translocates into the mitochondria where it promotes mtDNA transcription. In response to metabolic stress, translocates into the mitochondria where it promotes mtDNA transcription. Also acts as a key regulator of chondrogenic commitment of skeletal progenitor cells in response to lipid availability: when lipids levels are low, translocates to the nucleus and promotes expression of SOX9, which induces chondrogenic commitment and suppresses fatty acid oxidation. Also acts as a key regulator of regulatory T-cells (Treg) differentiation by activating expression of FOXP3. This is Forkhead box protein O3 from Homo sapiens (Human).